Reading from the N-terminus, the 207-residue chain is Putative 3-methyladenine DNA glycosylase (207 aa).

Belongs to the DNA glycosylase MPG family.

In Listeria monocytogenes serovar 1/2a (strain ATCC BAA-679 / EGD-e), this protein is Putative 3-methyladenine DNA glycosylase.